The sequence spans 99 residues: NADH-quinone oxidoreductase subunit K (99 aa).

Helical transmembrane passes span 2–22 (PVEYYLWLASILFGIGLLGVL), 28–48 (LILMMSVELMLNAANLTFLAF), and 60–80 (IAFFVIAVAAAEAAVGLAVVI).

Belongs to the complex I subunit 4L family. As to quaternary structure, NDH-1 is composed of 14 different subunits. Subunits NuoA, H, J, K, L, M, N constitute the membrane sector of the complex.

It is found in the cell inner membrane. The catalysed reaction is a quinone + NADH + 5 H(+)(in) = a quinol + NAD(+) + 4 H(+)(out). NDH-1 shuttles electrons from NADH, via FMN and iron-sulfur (Fe-S) centers, to quinones in the respiratory chain. The immediate electron acceptor for the enzyme in this species is believed to be ubiquinone. Couples the redox reaction to proton translocation (for every two electrons transferred, four hydrogen ions are translocated across the cytoplasmic membrane), and thus conserves the redox energy in a proton gradient. The polypeptide is NADH-quinone oxidoreductase subunit K (Anaeromyxobacter dehalogenans (strain 2CP-C)).